A 206-amino-acid chain; its full sequence is Small ribosomal subunit protein uS4 (206 aa).

The S4 RNA-binding domain maps to 93–153 (TRLDALVLRA…PKSQTMVPFQ (61 aa)).

The protein belongs to the universal ribosomal protein uS4 family. As to quaternary structure, part of the 30S ribosomal subunit. Contacts protein S5. The interaction surface between S4 and S5 is involved in control of translational fidelity.

Its function is as follows. One of the primary rRNA binding proteins, it binds directly to 16S rRNA where it nucleates assembly of the body of the 30S subunit. With S5 and S12 plays an important role in translational accuracy. This is Small ribosomal subunit protein uS4 from Bifidobacterium animalis subsp. lactis (strain AD011).